Consider the following 278-residue polypeptide: 4-deoxy-L-threo-5-hexosulose-uronate ketol-isomerase (278 aa).

Zn(2+) contacts are provided by His196, His198, Glu203, and His245.

This sequence belongs to the KduI family. As to quaternary structure, homohexamer. Zn(2+) is required as a cofactor.

The enzyme catalyses 5-dehydro-4-deoxy-D-glucuronate = 3-deoxy-D-glycero-2,5-hexodiulosonate. Its pathway is glycan metabolism; pectin degradation; 2-dehydro-3-deoxy-D-gluconate from pectin: step 4/5. In terms of biological role, catalyzes the isomerization of 5-dehydro-4-deoxy-D-glucuronate to 3-deoxy-D-glycero-2,5-hexodiulosonate. The protein is 4-deoxy-L-threo-5-hexosulose-uronate ketol-isomerase of Escherichia coli O127:H6 (strain E2348/69 / EPEC).